Consider the following 197-residue polypeptide: Imidazoleglycerol-phosphate dehydratase (197 aa).

It belongs to the imidazoleglycerol-phosphate dehydratase family.

The protein resides in the cytoplasm. It carries out the reaction D-erythro-1-(imidazol-4-yl)glycerol 3-phosphate = 3-(imidazol-4-yl)-2-oxopropyl phosphate + H2O. It functions in the pathway amino-acid biosynthesis; L-histidine biosynthesis; L-histidine from 5-phospho-alpha-D-ribose 1-diphosphate: step 6/9. The polypeptide is Imidazoleglycerol-phosphate dehydratase (Bradyrhizobium diazoefficiens (strain JCM 10833 / BCRC 13528 / IAM 13628 / NBRC 14792 / USDA 110)).